A 353-amino-acid chain; its full sequence is C-X-C chemokine receptor type 2 (353 aa).

Over 1–45 (FNMESDSFEDFWKGEDLSNYSYSSALPPFLLDASPCEPESLEINK) the chain is Extracellular. N-linked (GlcNAc...) asparagine glycosylation occurs at asparagine 19. A helical transmembrane segment spans residues 46–72 (YFVVIIYALVFLLSLLGNSLVILVILY). At 73 to 81 (SRVGRSVTD) the chain is on the cytoplasmic side. Residues 82-102 (VYLLNLALADLLFALTLPIWA) traverse the membrane as a helical segment. Over 103–117 (ASKVNGWIFGTFLCK) the chain is Extracellular. The cysteines at positions 116 and 193 are disulfide-linked. The helical transmembrane segment at 118–139 (VVSLLKEVNFYSGILLLACISV) threads the bilayer. Topologically, residues 140-160 (DRYLAIVHATRTLTQKRYLVK) are cytoplasmic. A helical membrane pass occupies residues 161–180 (FICLSIWGLSLLLALPVLLF). At 181–205 (RRTIYPSNVSPVCYEDMGNNTANWR) the chain is on the extracellular side. A helical transmembrane segment spans residues 206–228 (MLLRILPQSFGFIVPLLIMLFCY). Residues 229–248 (GFTLRTLFKAHMGQKHRAMR) are Cytoplasmic-facing. A helical membrane pass occupies residues 249–270 (VIFAVVLIFLLCWLPYNLVLLA). Topologically, residues 271-291 (DTLMRTQVIQETCERRNHINQ) are extracellular. Residues 292 to 312 (ALDATEILGILHSCLNPLIYA) traverse the membrane as a helical segment. The Cytoplasmic segment spans residues 313–353 (FIGQKFCHGLLKILAIHGLISKDSLPKDSRPSFVGSSSGHT).

This sequence belongs to the G-protein coupled receptor 1 family. As to quaternary structure, interacts with IL8. Interacts with GNAI2. Phosphorylated upon ligand binding; which is required for desensitization.

It localises to the cell membrane. Receptor for interleukin-8 which is a powerful neutrophil chemotactic factor. Binding of IL-8 to the receptor causes activation of neutrophils. This response is mediated via a G-protein that activates a phosphatidylinositol-calcium second messenger system. Binds to IL-8 with high affinity. Also binds with high affinity to CXCL3, GRO/MGSA and NAP-2. In Gorilla gorilla gorilla (Western lowland gorilla), this protein is C-X-C chemokine receptor type 2 (CXCR2).